Consider the following 101-residue polypeptide: NAD(P)H-quinone oxidoreductase subunit 4L, chloroplastic (101 aa).

3 helical membrane passes run 2–22 (ILEH…YGLI), 32–52 (MCLE…SDFF), and 61–81 (IFSI…LAIV).

It belongs to the complex I subunit 4L family. NDH is composed of at least 16 different subunits, 5 of which are encoded in the nucleus.

The protein localises to the plastid. It is found in the chloroplast thylakoid membrane. It carries out the reaction a plastoquinone + NADH + (n+1) H(+)(in) = a plastoquinol + NAD(+) + n H(+)(out). The enzyme catalyses a plastoquinone + NADPH + (n+1) H(+)(in) = a plastoquinol + NADP(+) + n H(+)(out). Functionally, NDH shuttles electrons from NAD(P)H:plastoquinone, via FMN and iron-sulfur (Fe-S) centers, to quinones in the photosynthetic chain and possibly in a chloroplast respiratory chain. The immediate electron acceptor for the enzyme in this species is believed to be plastoquinone. Couples the redox reaction to proton translocation, and thus conserves the redox energy in a proton gradient. In Eucalyptus globulus subsp. globulus (Tasmanian blue gum), this protein is NAD(P)H-quinone oxidoreductase subunit 4L, chloroplastic.